A 177-amino-acid chain; its full sequence is Large ribosomal subunit protein uL6 (177 aa).

The protein belongs to the universal ribosomal protein uL6 family. Part of the 50S ribosomal subunit.

Its function is as follows. This protein binds to the 23S rRNA, and is important in its secondary structure. It is located near the subunit interface in the base of the L7/L12 stalk, and near the tRNA binding site of the peptidyltransferase center. This is Large ribosomal subunit protein uL6 from Rickettsia conorii (strain ATCC VR-613 / Malish 7).